Reading from the N-terminus, the 567-residue chain is Methionine--tRNA ligase (567 aa).

The short motif at 11–21 (PYVQTVPHLGN) is the 'HIGH' region element. Zn(2+) contacts are provided by cysteine 143, cysteine 146, cysteine 156, and cysteine 159. The short motif at 331–335 (KFSKS) is the 'KMSKS' region element. Lysine 334 lines the ATP pocket.

The protein belongs to the class-I aminoacyl-tRNA synthetase family. MetG type 1 subfamily. Zn(2+) is required as a cofactor.

The protein localises to the cytoplasm. The catalysed reaction is tRNA(Met) + L-methionine + ATP = L-methionyl-tRNA(Met) + AMP + diphosphate. Its function is as follows. Is required not only for elongation of protein synthesis but also for the initiation of all mRNA translation through initiator tRNA(fMet) aminoacylation. The chain is Methionine--tRNA ligase from Pyrobaculum islandicum (strain DSM 4184 / JCM 9189 / GEO3).